We begin with the raw amino-acid sequence, 210 residues long: Rho-related GTP-binding protein RhoD (210 aa).

Residue 24–31 (GDGGCGKT) participates in GTP binding. Residues 46 to 54 (YSPTVFERY) carry the Effector region motif. GTP contacts are provided by residues 71-75 (DTAGQ) and 129-132 (CKID). At Cys207 the chain carries Cysteine methyl ester. A lipid anchor (S-geranylgeranyl cysteine) is attached at Cys207. Positions 208–210 (LAT) are cleaved as a propeptide — removed in mature form.

It belongs to the small GTPase superfamily. Rho family. In terms of assembly, interacts with PAK5. Interacts (in GTP-bound form) with DAPK3, FILIP1 and WHAMM. Interacts (independent of GTP-loaded status) with ANKFY1. As to expression, widely expressed.

Its subcellular location is the cell membrane. It is found in the early endosome. Functionally, involved in endosome dynamics. May coordinate membrane transport with the function of the cytoskeleton. Involved in the internalization and trafficking of activated tyrosine kinase receptors such as PDGFRB. Participates in the reorganization of actin cytoskeleton; the function seems to involve WHAMM and includes regulation of filopodia formation and actin filament bundling. Can modulate the effect of DAPK3 in reorganization of actin cytoskeleton and focal adhesion dissolution. In Mus musculus (Mouse), this protein is Rho-related GTP-binding protein RhoD (Rhod).